Here is a 431-residue protein sequence, read N- to C-terminus: MGPVVERPAEPGTSSAAELELLKRRAAERIDEAAERLGALSRAIWSAPELAYEEHRAHGELTRFFECEPPAASWAVQPHFGLPTAFRAEWAPPESAAGPRALQVAFLCEYDALPALGHACGHNLIAEVGVAAALGLRAALESIAAPPPVKVIVLGTPAEEDGGGKIDLIEAGAFENLDVVFMAHPSQENAAYLPDVAEHDVTVKYYGKASHAAAYPWEGVNALDAAVLAYTNLSVLRQQMKPTWRVHGIIKNGGVKPNIIPSYSELVYYFRAPSMKELQVLTKKAEDCFRAAALATGCTVDIESEAHDYYNVIPNKTLCSAYTENGKKLGMEFISEDAVLNGPSGSTDFGNVSFVVPGIHPYFYIGTDALNHTEQYTEAAGSQAAQLYTLRTAKALAMTALDVIFKPALLEGVRKEFKCKLQEEQLLNTAA.

This sequence belongs to the peptidase M20A family.

The enzyme catalyses beta-alanyl-L-lysine + H2O = beta-alanine + L-lysine. It carries out the reaction beta-alanyl-L-arginine + H2O = beta-alanine + L-arginine. The catalysed reaction is beta-alanyl-L-ornithine + H2O = beta-alanine + L-ornithine. It catalyses the reaction N(2)-(4-aminobutanoyl)-L-lysine + H2O = 4-aminobutanoate + L-lysine. The enzyme catalyses N(2)-(4-aminobutanoyl)-L-arginine + H2O = 4-aminobutanoate + L-arginine. It carries out the reaction N(2)-(4-aminobutanoyl)-L-ornithine + H2O = 4-aminobutanoate + L-ornithine. Functionally, catalyzes the peptide bond hydrolysis in dipeptides having basic amino acids lysine, ornithine or arginine at C-terminus. Postulated to function in a metabolite repair mechanism by eliminating alternate dipeptide by-products formed during carnosine synthesis. The protein is Xaa-Arg dipeptidase of Mus musculus (Mouse).